The sequence spans 348 residues: Dihydroorotase (348 aa).

Zn(2+) is bound by residues His-17 and His-19. Residues His-19–Arg-21 and Asn-45 contribute to the substrate site. Residues Lys-103, His-140, and His-178 each coordinate Zn(2+). Lys-103 is subject to N6-carboxylysine. Residue His-140 coordinates substrate. Leu-223 contacts substrate. Asp-251 is a Zn(2+) binding site. Asp-251 is an active-site residue. Residues His-255 and Ala-267 each contribute to the substrate site.

This sequence belongs to the metallo-dependent hydrolases superfamily. DHOase family. Class II DHOase subfamily. Homodimer. Zn(2+) serves as cofactor.

It catalyses the reaction (S)-dihydroorotate + H2O = N-carbamoyl-L-aspartate + H(+). The protein operates within pyrimidine metabolism; UMP biosynthesis via de novo pathway; (S)-dihydroorotate from bicarbonate: step 3/3. In terms of biological role, catalyzes the reversible cyclization of carbamoyl aspartate to dihydroorotate. The protein is Dihydroorotase of Yersinia pestis.